A 232-amino-acid polypeptide reads, in one-letter code: Cytidylate kinase (232 aa).

An ATP-binding site is contributed by 19 to 27; that stretch reads GPAGVGKTT.

This sequence belongs to the cytidylate kinase family. Type 1 subfamily.

It is found in the cytoplasm. It carries out the reaction CMP + ATP = CDP + ADP. The catalysed reaction is dCMP + ATP = dCDP + ADP. In Nitratidesulfovibrio vulgaris (strain ATCC 29579 / DSM 644 / CCUG 34227 / NCIMB 8303 / VKM B-1760 / Hildenborough) (Desulfovibrio vulgaris), this protein is Cytidylate kinase.